The following is a 309-amino-acid chain: Glutaminase (309 aa).

Substrate is bound by residues serine 64, asparagine 114, glutamate 160, asparagine 167, tyrosine 191, tyrosine 243, and valine 261.

This sequence belongs to the glutaminase family. As to quaternary structure, homotetramer.

It catalyses the reaction L-glutamine + H2O = L-glutamate + NH4(+). The sequence is that of Glutaminase from Rhizobium leguminosarum bv. trifolii (strain WSM2304).